A 634-amino-acid chain; its full sequence is MAQRVAVNDGAAGSKRTSRVRVAVRLRPYMDKQDEKSEGSCVRGLGPQKLEIINWRNATETLQYQFDVFHGEETTQQEVFLTSVKPILPHILNGQNASVFAYGPTGAGKTHTMLGSQEQPGVIPRAVKEVFNLVGAQKKEQDGWEYSIGMSYLEIYNEKVLDLLSPGSQDLPIREDKDRNILIPGLTHTPLSSFADFDTHFIPASLNRTTASTKLNQRSSRSHAILLIKVVKSQRGPPHRQQTGKLYLVDLAGSEDNRRTGNQGIRLKESGAINLSLFTLSKVVDALNTGAGGRVPYRDSKLTRLLQDSLGGSAHSVMITNIAPEYKYYFDTFSALNFAAKSKQIVNRPFVRETVLAPTIAPGKRTREEQEAGGSGEPQNKRSKEGKKAEHSPSPPLHPQSSPDSSVLDRLLALEKMMMGSAERERLNLLKTVAQSRKEIQMLKEKQKELEDKANMFNKQKETTEKESKDALLFKTDLPPLHRKQSTAAKPRKQQAVVTPLQVSQVQPLQQCAVVCKPSQTLVKKKRVQTEVCDGKENIGVDLPPVEDVNWESRLDPALLEQSRKKILQTLNSGSLKELKSLQQIGDKKAKLIMGWREINGDFTQVEDLKKIEGVTVKRFSSFIKANILSSMGK.

In terms of domain architecture, Kinesin motor spans 19-345; it reads RVRVAVRLRP…LNFAAKSKQI (327 aa). Position 103-110 (103-110) interacts with ATP; the sequence is GPTGAGKT. The tract at residues 357 to 406 is disordered; that stretch reads APTIAPGKRTREEQEAGGSGEPQNKRSKEGKKAEHSPSPPLHPQSSPDSS. Residues 379–391 show a composition bias toward basic and acidic residues; sequence QNKRSKEGKKAEH. Positions 421-471 form a coiled coil; the sequence is SAERERLNLLKTVAQSRKEIQMLKEKQKELEDKANMFNKQKETTEKESKDA.

This sequence belongs to the TRAFAC class myosin-kinesin ATPase superfamily. Kinesin family. In terms of processing, ubiquitinated, leading to its subsequent proteasomal degradation.

The protein localises to the nucleus. The protein resides in the cytoplasm. It localises to the cytoskeleton. Functionally, kinesin family member that is involved in spindle formation and the movements of chromosomes during mitosis and meiosis. Binds to microtubules and to DNA. In Danio rerio (Zebrafish), this protein is Kinesin-like protein KIF22 (kif22).